A 330-amino-acid polypeptide reads, in one-letter code: MSRVFSGIQPTGDPHIGNYFGAMQNYVRLGEQYGKQSLYCVVDLHAITNPGAFDPQTLAQKTFDMAVANFAIGLDPSKVVFFVQSHVPEHQELSWIFTCVTPVGELERMTQYKDKSAQFESVPSGLLMYPALMAADILLYKADIVPVGEDQTQHIELTREIARKFNHNFGETFTEPKAVYNKEALRIPGVDGQGKMSKSKGNTIGILEPFGDIWQKLRVAPTDPARVRRTDPGDPDKCLIGDYHKLFSPPETLETVYQGCRTAGIGCVDCKKMLMTHITEHLDPIQTRAAQLRADPDYVRDALRQGDQEARAIASEVMDEVRQKVGFLKL.

Residues 9–11 and 17–18 contribute to the ATP site; these read QPT and GN. Residues 10–18 carry the 'HIGH' region motif; sequence PTGDPHIGN. L-tryptophan is bound at residue Asp136. Residues 148-150, Ile187, and 195-199 contribute to the ATP site; these read GED and KMSKS. The 'KMSKS' region signature appears at 195-199; it reads KMSKS.

Belongs to the class-I aminoacyl-tRNA synthetase family. In terms of assembly, homodimer.

The protein resides in the cytoplasm. The enzyme catalyses tRNA(Trp) + L-tryptophan + ATP = L-tryptophyl-tRNA(Trp) + AMP + diphosphate + H(+). Functionally, catalyzes the attachment of tryptophan to tRNA(Trp). The polypeptide is Tryptophan--tRNA ligase (Deinococcus radiodurans (strain ATCC 13939 / DSM 20539 / JCM 16871 / CCUG 27074 / LMG 4051 / NBRC 15346 / NCIMB 9279 / VKM B-1422 / R1)).